The following is a 583-amino-acid chain: Complement factor I (583 aa).

Residues methionine 1 to cysteine 18 form the signal peptide. 16 disulfide bridges follow: cysteine 33–cysteine 255, cysteine 43–cysteine 54, cysteine 48–cysteine 59, cysteine 61–cysteine 93, cysteine 67–cysteine 86, cysteine 75–cysteine 106, cysteine 141–cysteine 181, cysteine 154–cysteine 214, cysteine 186–cysteine 196, cysteine 229–cysteine 247, cysteine 259–cysteine 271, cysteine 266–cysteine 284, cysteine 278–cysteine 293, cysteine 327–cysteine 453, cysteine 365–cysteine 381, and cysteine 373–cysteine 444. In terms of domain architecture, Kazal-like spans isoleucine 55–alanine 108. N-linked (GlcNAc...) asparagine glycosylation is found at asparagine 70, asparagine 103, asparagine 173, and asparagine 177. Positions valine 114 to valine 212 constitute an SRCR domain. 2 LDL-receptor class A domains span residues valine 213–lysine 257 and alanine 258–glutamate 294. Residues lysine 239, aspartate 242, isoleucine 244, aspartate 246, aspartate 252, and glutamate 253 each contribute to the Ca(2+) site. The Ca(2+) site is built by tyrosine 276, asparagine 279, glutamate 281, aspartate 283, aspartate 289, and glutamate 290. Residues isoleucine 340–glycine 574 enclose the Peptidase S1 domain. Residues histidine 380 and aspartate 429 each act as charge relay system in the active site. N-linked (GlcNAc...) asparagine glycans are attached at residues asparagine 464 and asparagine 494. Intrachain disulfides connect cysteine 467/cysteine 531, cysteine 495/cysteine 510, and cysteine 521/cysteine 550. Serine 525 acts as the Charge relay system in catalysis. An N-linked (GlcNAc...) asparagine glycan is attached at asparagine 536.

Belongs to the peptidase S1 family. As to quaternary structure, heterodimer of a light and heavy chains; disulfide-linked. The fully processed and mature protein circulates as a zymogen, and is allosterically activated by substrate-induced remodeling of the active site. Plasma.

The protein localises to the secreted. Its subcellular location is the extracellular space. The enzyme catalyses Inactivates complement subcomponents C3b, iC3b and C4b by proteolytic cleavage.. Functionally, responsible for cleaving the alpha-chains of C4b and C3b in the presence of the cofactors C4-binding protein and factor H respectively. The sequence is that of Complement factor I (CFI) from Pongo abelii (Sumatran orangutan).